The sequence spans 124 residues: Fluoride-specific ion channel FluC (124 aa).

4 helical membrane-spanning segments follow: residues leucine 4–phenylalanine 24, phenylalanine 35–glycine 55, isoleucine 60–serine 80, and valine 102–serine 122. 2 residues coordinate Na(+): glycine 74 and threonine 77.

It belongs to the fluoride channel Fluc/FEX (TC 1.A.43) family.

The protein localises to the cell inner membrane. It carries out the reaction fluoride(in) = fluoride(out). Na(+) is not transported, but it plays an essential structural role and its presence is essential for fluoride channel function. Functionally, fluoride-specific ion channel. Important for reducing fluoride concentration in the cell, thus reducing its toxicity. The chain is Fluoride-specific ion channel FluC from Shewanella sp. (strain ANA-3).